Reading from the N-terminus, the 106-residue chain is Pyrimidine/purine nucleoside phosphorylase (106 aa).

This sequence belongs to the nucleoside phosphorylase PpnP family.

It catalyses the reaction a purine D-ribonucleoside + phosphate = a purine nucleobase + alpha-D-ribose 1-phosphate. The catalysed reaction is adenosine + phosphate = alpha-D-ribose 1-phosphate + adenine. It carries out the reaction cytidine + phosphate = cytosine + alpha-D-ribose 1-phosphate. The enzyme catalyses guanosine + phosphate = alpha-D-ribose 1-phosphate + guanine. It catalyses the reaction inosine + phosphate = alpha-D-ribose 1-phosphate + hypoxanthine. The catalysed reaction is thymidine + phosphate = 2-deoxy-alpha-D-ribose 1-phosphate + thymine. It carries out the reaction uridine + phosphate = alpha-D-ribose 1-phosphate + uracil. The enzyme catalyses xanthosine + phosphate = alpha-D-ribose 1-phosphate + xanthine. Catalyzes the phosphorolysis of diverse nucleosides, yielding D-ribose 1-phosphate and the respective free bases. Can use uridine, adenosine, guanosine, cytidine, thymidine, inosine and xanthosine as substrates. Also catalyzes the reverse reactions. The protein is Pyrimidine/purine nucleoside phosphorylase of Burkholderia ambifaria (strain ATCC BAA-244 / DSM 16087 / CCUG 44356 / LMG 19182 / AMMD) (Burkholderia cepacia (strain AMMD)).